The sequence spans 211 residues: Protein-L-isoaspartate O-methyltransferase (211 aa).

Ser-62 is a catalytic residue.

This sequence belongs to the methyltransferase superfamily. L-isoaspartyl/D-aspartyl protein methyltransferase family.

Its subcellular location is the cytoplasm. The enzyme catalyses [protein]-L-isoaspartate + S-adenosyl-L-methionine = [protein]-L-isoaspartate alpha-methyl ester + S-adenosyl-L-homocysteine. Its function is as follows. Catalyzes the methyl esterification of L-isoaspartyl residues in peptides and proteins that result from spontaneous decomposition of normal L-aspartyl and L-asparaginyl residues. It plays a role in the repair and/or degradation of damaged proteins. The polypeptide is Protein-L-isoaspartate O-methyltransferase (Shewanella piezotolerans (strain WP3 / JCM 13877)).